Here is a 357-residue protein sequence, read N- to C-terminus: 3'-hydroxy-N-methyl-(S)-coclaurine 4'-O-methyltransferase 2 (357 aa).

Residue aspartate 226 participates in S-adenosyl-L-methionine binding. Histidine 264 functions as the Proton acceptor in the catalytic mechanism.

This sequence belongs to the class I-like SAM-binding methyltransferase superfamily. Cation-independent O-methyltransferase family. COMT subfamily. Homodimer. Expressed in roots, stems, leaves and flowers.

The catalysed reaction is (S)-3'-hydroxy-N-methylcoclaurine + S-adenosyl-L-methionine = (S)-reticuline + S-adenosyl-L-homocysteine + H(+). It functions in the pathway alkaloid biosynthesis; (S)-reticuline biosynthesis; (S)-reticuline from (S)-norcoclaurine: step 4/4. Its function is as follows. Involved in the biosynthesis of benzylisoquinoline alkaloids. Catalyzes the transfer of the methyl group to the 4'-hydroxyl group of 3'-hydroxy-N-methylcoclaurine to form reticuline. Can also use laudanosoline and, with a lower activity, 6-O-methylnorlaudanosoline and norlaudanosoline as substrates. Also involved in the papaverine biosynthesis. The protein is 3'-hydroxy-N-methyl-(S)-coclaurine 4'-O-methyltransferase 2 of Papaver somniferum (Opium poppy).